The following is a 290-amino-acid chain: Picrinine-N-methytransferase TMT4 (290 aa).

Residues 71–80 are SAM motif I; the sequence is MLDVGCGIGG. The Vacuolar targeting signal motif lies at 133 to 139; it reads DGTFDVV. The tract at residues 134–142 is SAM motif II; that stretch reads GTFDVVFTI. The tract at residues 161-170 is SAM motif III; that stretch reads VAAPGAAIVI.

The protein belongs to the class I-like SAM-binding methyltransferase superfamily. gTMT family. Homodimer.

It localises to the vacuole membrane. The catalysed reaction is picrinine + S-adenosyl-L-methionine = ervincine + S-adenosyl-L-homocysteine + H(+). The protein operates within alkaloid biosynthesis; vindoline biosynthesis. Its function is as follows. S-adenosyl-L-methionine-dependent N-methyltransferase involved in the biosynthesis of biologically active monoterpenoid indole alkaloids (MIAs) natural products including vindoline. Catalyzes the conversion of picrinine to N-methylpicrinine (ervincine). The sequence is that of Picrinine-N-methytransferase TMT4 from Catharanthus roseus (Madagascar periwinkle).